Reading from the N-terminus, the 112-residue chain is Putative pterin-4-alpha-carbinolamine dehydratase (112 aa).

A disordered region spans residues 1-30 (MSDELQSRTCTPCRGDVPPMTKAEAKRQLA).

It belongs to the pterin-4-alpha-carbinolamine dehydratase family.

The catalysed reaction is (4aS,6R)-4a-hydroxy-L-erythro-5,6,7,8-tetrahydrobiopterin = (6R)-L-erythro-6,7-dihydrobiopterin + H2O. In Aromatoleum aromaticum (strain DSM 19018 / LMG 30748 / EbN1) (Azoarcus sp. (strain EbN1)), this protein is Putative pterin-4-alpha-carbinolamine dehydratase.